We begin with the raw amino-acid sequence, 359 residues long: Alanine racemase, biosynthetic (359 aa).

The active-site Proton acceptor; specific for D-alanine is K34. K34 is modified (N6-(pyridoxal phosphate)lysine). A substrate-binding site is contributed by R129. The Proton acceptor; specific for L-alanine role is filled by Y255. A substrate-binding site is contributed by M303.

This sequence belongs to the alanine racemase family. The cofactor is pyridoxal 5'-phosphate.

It catalyses the reaction L-alanine = D-alanine. Its pathway is amino-acid biosynthesis; D-alanine biosynthesis; D-alanine from L-alanine: step 1/1. The protein operates within cell wall biogenesis; peptidoglycan biosynthesis. Functionally, catalyzes the interconversion of L-alanine and D-alanine. Provides the D-alanine required for cell wall biosynthesis. This is Alanine racemase, biosynthetic (alr) from Escherichia coli O6:H1 (strain CFT073 / ATCC 700928 / UPEC).